An 88-amino-acid chain; its full sequence is C-C motif chemokine 18 (88 aa).

An N-terminal signal peptide occupies residues 1 to 19 (MKGLAAALLVLCTVALCSC). 2 disulfides stabilise this stretch: cysteine 29-cysteine 53 and cysteine 30-cysteine 69.

It belongs to the intercrine beta (chemokine CC) family. The Cys-29/Cys-53 disulfide bond is required for activity.

The protein localises to the secreted. Chemotactic factor that attracts lymphocytes but not monocytes or granulocytes. May be involved in B-cell migration into B-cell follicles in lymph nodes. Attracts naive T-lymphocytes toward dendritic cells and activated macrophages in lymph nodes, has chemotactic activity for naive T-cells, CD4+ and CD8+ T-cells and thus may play a role in both humoral and cell-mediated immunity responses. The sequence is that of C-C motif chemokine 18 (CCL18) from Macaca mulatta (Rhesus macaque).